The primary structure comprises 545 residues: MSGRAPFIKPVLEYNEHGWGPCEELSVDVPYQPFCKSDRVGKISDWTAPPTERKFANKYVSSFGNSNQYAYFHEDDESTYHLVDTSGFKGFRPFQRGRFRGNIRNNPRTRGRTGRGGAVTGIGGNQPGVGVNERTKYGKGRDNRRQMGRRFGRNAPTRMRESSVVVRSDWVSIEEIDFPRLLKLSLPNVKEGQDVVTCGSLEYYDKTYDRINVKNERPLLKTDRIIHTLTTTDDPVIRRLSKTIGNIFATDEILATIMCCTRSNYSWDVVFDKVGNKIFLDKRDNAQFDLLTVNETALEPPLDEEGSINSPHSLAMEATLINHNFCQQVLRGGDQKKYQFEEPYPLEESGVDLVSIGYRYKQWDLGNNIILIARCKHNGVLQGPNGEVQFLSIRALNEWDSKASNSLEWRQKLDTQHGAVLASELRNNACKLARWTVESVLSGSDQLKLGYVSRVIPRDHLRHVILRTQQFKPQEFSTQINLSMDNAWGILRCLIDIVMKQPDGKYLLMKDPNKPMVRLYDVPENAFESSDEDDLSDDKLFLLSN.

Over residues 99-113 (FRGNIRNNPRTRGRT) the composition is skewed to basic residues. A disordered region spans residues 99-158 (FRGNIRNNPRTRGRTGRGGAVTGIGGNQPGVGVNERTKYGKGRDNRRQMGRRFGRNAPTR). Over residues 114-127 (GRGGAVTGIGGNQP) the composition is skewed to gly residues. The segment covering 133-145 (ERTKYGKGRDNRR) has biased composition (basic and acidic residues). The interval 287 to 301 (QFDLLTVNETALEPP) is RNA gate.

Belongs to the eIF-3 subunit D family. Component of the eukaryotic translation initiation factor 3 (eIF-3) complex. The eIF-3 complex interacts with pix.

The protein resides in the cytoplasm. Its function is as follows. mRNA cap-binding component of the eukaryotic translation initiation factor 3 (eIF-3) complex, which is involved in protein synthesis of a specialized repertoire of mRNAs and, together with other initiation factors, stimulates binding of mRNA and methionyl-tRNAi to the 40S ribosome. The eIF-3 complex specifically targets and initiates translation of a subset of mRNAs involved in cell proliferation. In the eIF-3 complex, eif3d specifically recognizes and binds the 7-methylguanosine cap of a subset of mRNAs. The polypeptide is Eukaryotic translation initiation factor 3 subunit D-2 (Drosophila persimilis (Fruit fly)).